Reading from the N-terminus, the 342-residue chain is Protein FDO1 (342 aa).

3 disordered regions span residues 1–36 (MEEN…NGSD), 57–76 (MSPM…TLSV), and 299–322 (GRTI…GNRT). The segment covering 15 to 25 (ATWSNQMGSPE) has biased composition (polar residues). Residues 308-319 (NTKDESIQDSHG) show a composition bias toward basic and acidic residues.

In terms of assembly, interacts with FKH1.

Its function is as follows. In concert with FKH1, plays a role in directionality of mating type switching by controlling which donor mating-type locus is inserted into MAT locus during mating type switching. In Saccharomyces cerevisiae (strain ATCC 204508 / S288c) (Baker's yeast), this protein is Protein FDO1.